Here is a 92-residue protein sequence, read N- to C-terminus: Small ribosomal subunit protein uS19 (92 aa).

It belongs to the universal ribosomal protein uS19 family.

Its function is as follows. Protein S19 forms a complex with S13 that binds strongly to the 16S ribosomal RNA. In Methylocella silvestris (strain DSM 15510 / CIP 108128 / LMG 27833 / NCIMB 13906 / BL2), this protein is Small ribosomal subunit protein uS19.